Reading from the N-terminus, the 353-residue chain is MDLEASLLPTGPNTSNTSDGPDNLTSAGSPPRSGSVSYINIIMPSVFGTICLLGIIGNSMVIFAVVKKSKLHWCNNVPDIFIINLSVVDLLFLLGMPFMIHQLMGNGVWHFGETMCTLITAMDANSQFTSTYILTAMAIDRYLATVHPISSTKFRKPSVATLVICLLWALSFISITPVWLYARLIPFPGGAVGCGIRLPNPDTDLYWFTLYQFFLAFALPFVVITAAYVRILQRMTSSVAPASQRSIRLRTKRVTRTAIAICLVFFVCWAPYYVLQLTQLSISRPTLTFVYLYNAAISLGYANSCLNPFVYIVLCETFRKRLVLSVKPAAQGQLRAVSNAQTADEERTESKGT.

The disordered stretch occupies residues 1–31 (MDLEASLLPTGPNTSNTSDGPDNLTSAGSPP). The Extracellular segment spans residues 1-45 (MDLEASLLPTGPNTSNTSDGPDNLTSAGSPPRSGSVSYINIIMPS). The span at 11 to 31 (GPNTSNTSDGPDNLTSAGSPP) shows a compositional bias: polar residues. N-linked (GlcNAc...) asparagine glycosylation is found at Asn-13, Asn-16, and Asn-23. The helical transmembrane segment at 46–66 (VFGTICLLGIIGNSMVIFAVV) threads the bilayer. Residues 67 to 79 (KKSKLHWCNNVPD) are Cytoplasmic-facing. Residues 80-100 (IFIINLSVVDLLFLLGMPFMI) form a helical membrane-spanning segment. At 101–118 (HQLMGNGVWHFGETMCTL) the chain is on the extracellular side. An intrachain disulfide couples Cys-116 to Cys-194. The chain crosses the membrane as a helical span at residues 119 to 139 (ITAMDANSQFTSTYILTAMAI). At 140–161 (DRYLATVHPISSTKFRKPSVAT) the chain is on the cytoplasmic side. The helical transmembrane segment at 162-182 (LVICLLWALSFISITPVWLYA) threads the bilayer. Topologically, residues 183-204 (RLIPFPGGAVGCGIRLPNPDTD) are extracellular. Residues 205–225 (LYWFTLYQFFLAFALPFVVIT) form a helical membrane-spanning segment. The Cytoplasmic segment spans residues 226-257 (AAYVRILQRMTSSVAPASQRSIRLRTKRVTRT). The helical transmembrane segment at 258 to 278 (AIAICLVFFVCWAPYYVLQLT) threads the bilayer. Residues 279–294 (QLSISRPTLTFVYLYN) are Extracellular-facing. The helical transmembrane segment at 295 to 315 (AAISLGYANSCLNPFVYIVLC) threads the bilayer. Residues 316–353 (ETFRKRLVLSVKPAAQGQLRAVSNAQTADEERTESKGT) are Cytoplasmic-facing.

Belongs to the G-protein coupled receptor 1 family. In terms of assembly, interacts with NCDN.

The protein resides in the cell membrane. Its function is as follows. Receptor for melanin-concentrating hormone, coupled to both G proteins that inhibit adenylyl cyclase and G proteins that activate phosphoinositide hydrolysis. This chain is Melanin-concentrating hormone receptor 1, found in Macaca mulatta (Rhesus macaque).